The following is a 460-amino-acid chain: Arginine biosynthesis bifunctional protein ArgJ, chloroplastic (460 aa).

The transit peptide at 1–26 directs the protein to the chloroplast; it reads MYLSVPHYPSLKFTAFQSHKRNFRVF. The substrate site is built by T202, K228, T239, E328, N455, and T460. T239 functions as the Nucleophile in the catalytic mechanism.

It belongs to the ArgJ family. Heterodimer of an alpha and a beta chain.

Its subcellular location is the plastid. The protein localises to the chloroplast. The catalysed reaction is N(2)-acetyl-L-ornithine + L-glutamate = N-acetyl-L-glutamate + L-ornithine. It catalyses the reaction L-glutamate + acetyl-CoA = N-acetyl-L-glutamate + CoA + H(+). It participates in amino-acid biosynthesis; L-arginine biosynthesis; L-ornithine and N-acetyl-L-glutamate from L-glutamate and N(2)-acetyl-L-ornithine (cyclic): step 1/1. The protein operates within amino-acid biosynthesis; L-arginine biosynthesis; N(2)-acetyl-L-ornithine from L-glutamate: step 1/4. In terms of biological role, catalyzes two activities which are involved in the cyclic version of arginine biosynthesis: the synthesis of acetylglutamate from glutamate and acetyl-CoA, and of ornithine by transacetylation between acetylornithine and glutamate. The protein is Arginine biosynthesis bifunctional protein ArgJ, chloroplastic of Citrullus lanatus (Watermelon).